The sequence spans 99 residues: Aspartyl/glutamyl-tRNA(Asn/Gln) amidotransferase subunit C (99 aa).

This sequence belongs to the GatC family. As to quaternary structure, heterotrimer of A, B and C subunits.

It carries out the reaction L-glutamyl-tRNA(Gln) + L-glutamine + ATP + H2O = L-glutaminyl-tRNA(Gln) + L-glutamate + ADP + phosphate + H(+). The catalysed reaction is L-aspartyl-tRNA(Asn) + L-glutamine + ATP + H2O = L-asparaginyl-tRNA(Asn) + L-glutamate + ADP + phosphate + 2 H(+). Its function is as follows. Allows the formation of correctly charged Asn-tRNA(Asn) or Gln-tRNA(Gln) through the transamidation of misacylated Asp-tRNA(Asn) or Glu-tRNA(Gln) in organisms which lack either or both of asparaginyl-tRNA or glutaminyl-tRNA synthetases. The reaction takes place in the presence of glutamine and ATP through an activated phospho-Asp-tRNA(Asn) or phospho-Glu-tRNA(Gln). This Paracidovorax citrulli (strain AAC00-1) (Acidovorax citrulli) protein is Aspartyl/glutamyl-tRNA(Asn/Gln) amidotransferase subunit C.